The following is a 37-amino-acid chain: Large ribosomal subunit protein bL36 (37 aa).

It belongs to the bacterial ribosomal protein bL36 family.

The polypeptide is Large ribosomal subunit protein bL36 (Sulfurihydrogenibium sp. (strain YO3AOP1)).